The primary structure comprises 390 residues: Transforming protein cbl (390 aa).

Residues A1–G52 are disordered. The segment covering G42–G52 has biased composition (gly residues). Positions P77–Q205 are 4H. The 305-residue stretch at P77–G381 folds into the Cbl-PTB domain. The EF-hand-like stretch occupies residues G206 to F278. Ca(2+) contacts are provided by D259, T261, N263, Y265, and E270. The interval Q279–G381 is SH2-like. R324 contacts 4-O-phospho-L-tyrosine.

In terms of biological role, induces early B-lineage lymphomas. In Mus musculus (Mouse), this protein is Transforming protein cbl (V-CBL).